Consider the following 599-residue polypeptide: Proteasome-associated ATPase (599 aa).

Residues 1–22 (MPHGHPGSQPDEGGELSNGSSS) are disordered. Positions 21 to 97 (SSGELTAQIR…LREEVDRLAQ (77 aa)) form a coiled coil. 286–291 (GCGKTL) serves as a coordination point for ATP. A docks into pockets in the proteasome alpha-ring region spans residues 598–599 (YL).

Belongs to the AAA ATPase family. Homohexamer. Assembles into a hexameric ring structure that caps the 20S proteasome core. Strongly interacts with the prokaryotic ubiquitin-like protein Pup through a hydrophobic interface; the interacting region of ARC lies in its N-terminal coiled-coil domain. There is one Pup binding site per ARC hexamer ring. Upon ATP-binding, the C-terminus of ARC interacts with the alpha-rings of the proteasome core, possibly by binding to the intersubunit pockets.

Its pathway is protein degradation; proteasomal Pup-dependent pathway. Its function is as follows. ATPase which is responsible for recognizing, binding, unfolding and translocation of pupylated proteins into the bacterial 20S proteasome core particle. May be essential for opening the gate of the 20S proteasome via an interaction with its C-terminus, thereby allowing substrate entry and access to the site of proteolysis. Thus, the C-termini of the proteasomal ATPase may function like a 'key in a lock' to induce gate opening and therefore regulate proteolysis. This Actinosynnema mirum (strain ATCC 29888 / DSM 43827 / JCM 3225 / NBRC 14064 / NCIMB 13271 / NRRL B-12336 / IMRU 3971 / 101) protein is Proteasome-associated ATPase.